A 139-amino-acid chain; its full sequence is MKKVLALVVAAAMGLSSAAFAADAVSTTQAPAATHSTAAKTTHHKKHHKAAAKPAAEQKAQAAKKHKKAEAKPAAAQKAQAAKKHKKVAAKPAAPQKAQAAKKHHKAAAKPAAQKAQAAKKHHKTTKHQAAKPTAQPAA.

The signal sequence occupies residues 1 to 21 (MKKVLALVVAAAMGLSSAAFA). A propeptide spanning residues 22–80 (ADAVSTTQAPAATHSTAAKTTHHKKHHKAAAKPAAEQKAQAAKKHKKAEAKPAAAQKAQ) is cleaved from the precursor. A compositionally biased stretch (low complexity) spans 27–40 (TTQAPAATHSTAAK). Residues 27 to 139 (TTQAPAATHS…AAKPTAQPAA (113 aa)) are disordered. Basic residues predominate over residues 41-51 (TTHHKKHHKAA). Low complexity-rich tracts occupy residues 52-61 (AKPAAEQKAQ) and 90-99 (AKPAAPQKAQ). Over residues 118–130 (AAKKHHKTTKHQA) the composition is skewed to basic residues.

The protein belongs to the Asr family. Post-translationally, proteolytic processing gives rise to the active protein.

The protein resides in the periplasm. Its function is as follows. Required for growth and/or survival at acidic conditions. The polypeptide is Acid shock protein (asr) (Klebsiella pneumoniae).